Consider the following 745-residue polypeptide: Cytoskeleton-associated protein 2-like (745 aa).

Disordered stretches follow at residues 26–305 (KGKL…VNRV), 319–362 (PATE…LGPQ), 422–483 (FPPQ…TYKR), and 608–638 (EAVTSDTSAAGTNTTSAEELAKEESEQPCPS). Composition is skewed to polar residues over residues 67 to 89 (SKTTRPINIKFQTKPASITASQK) and 101 to 136 (GLTSRCFSSNTDCKQSSKPQQQPRAVSFTAGLSRNP). The short motif at 183–185 (KEN) is the KEN box element. A compositionally biased stretch (basic and acidic residues) spans 192–202 (KPEKPDPELHS). K195 participates in a covalent cross-link: Glycyl lysine isopeptide (Lys-Gly) (interchain with G-Cter in SUMO1); alternate. A Glycyl lysine isopeptide (Lys-Gly) (interchain with G-Cter in SUMO2); alternate cross-link involves residue K195. Polar residues-rich tracts occupy residues 205–216 (KPNTGSSNQTQK), 224–233 (LSKSSVTQTA), 242–253 (FIRNTQIRTQAV), and 284–301 (NKTQTSKKPMTKNTQDIT). Residues 427–442 (HFLNKTAPRTQASTAA) are compositionally biased toward polar residues. Over residues 459–475 (KKPEGEDRRKQLEEWQK) the composition is skewed to basic and acidic residues. A compositionally biased stretch (polar residues) spans 608-624 (EAVTSDTSAAGTNTTSA). The residue at position 745 (S745) is a Phosphoserine.

Belongs to the CKAP2 family. Ubiquitinated by the anaphase promoting complex/cyclosome (APC/C). Highly expressed in regions of active neurogenesis and neural stem/progenitor cells (NSPCs), both embryonic and adult, not detected in lung, liver, kidney, heart, and skeletal muscle.

It is found in the cytoplasm. Its subcellular location is the cytoskeleton. The protein resides in the spindle pole. Microtubule-associated protein required for mitotic spindle formation and cell-cycle progression in neural progenitor cells. This Mus musculus (Mouse) protein is Cytoskeleton-associated protein 2-like (Ckap2l).